Reading from the N-terminus, the 243-residue chain is UPF0246 protein MGAS9429_Spy1799 (243 aa).

It belongs to the UPF0246 family.

This chain is UPF0246 protein MGAS9429_Spy1799, found in Streptococcus pyogenes serotype M12 (strain MGAS9429).